The primary structure comprises 138 residues: Ribosome-binding factor A (138 aa).

The tract at residues 119 to 138 (RSPEVQRDLGPSNEKDDEQN) is disordered.

It belongs to the RbfA family. As to quaternary structure, monomer. Binds 30S ribosomal subunits, but not 50S ribosomal subunits or 70S ribosomes.

The protein localises to the cytoplasm. Its function is as follows. One of several proteins that assist in the late maturation steps of the functional core of the 30S ribosomal subunit. Associates with free 30S ribosomal subunits (but not with 30S subunits that are part of 70S ribosomes or polysomes). Required for efficient processing of 16S rRNA. May interact with the 5'-terminal helix region of 16S rRNA. The protein is Ribosome-binding factor A of Agrobacterium fabrum (strain C58 / ATCC 33970) (Agrobacterium tumefaciens (strain C58)).